The sequence spans 637 residues: 1-deoxy-D-xylulose-5-phosphate synthase (637 aa).

Thiamine diphosphate contacts are provided by residues His-71 and 112–114 (SHA). Asp-144 is a Mg(2+) binding site. Residues 145–146 (GA), Asn-173, Tyr-284, and Glu-365 contribute to the thiamine diphosphate site. Mg(2+) is bound at residue Asn-173.

Belongs to the transketolase family. DXPS subfamily. Homodimer. Requires Mg(2+) as cofactor. The cofactor is thiamine diphosphate.

The catalysed reaction is D-glyceraldehyde 3-phosphate + pyruvate + H(+) = 1-deoxy-D-xylulose 5-phosphate + CO2. It functions in the pathway metabolic intermediate biosynthesis; 1-deoxy-D-xylulose 5-phosphate biosynthesis; 1-deoxy-D-xylulose 5-phosphate from D-glyceraldehyde 3-phosphate and pyruvate: step 1/1. Catalyzes the acyloin condensation reaction between C atoms 2 and 3 of pyruvate and glyceraldehyde 3-phosphate to yield 1-deoxy-D-xylulose-5-phosphate (DXP). In Mycobacterium ulcerans (strain Agy99), this protein is 1-deoxy-D-xylulose-5-phosphate synthase.